A 930-amino-acid chain; its full sequence is MPSLLSLVLTFLAVSSPSCCQNSDTASPKASNGASFPWNNMRLPEYITPIHYDLMIHANLSTLTFWGKTEVEITVSQPTSTIIMHSHQLQISKATLRRGAEEMLPEEPLKLMEYSAHEQVALLTAQPLLAGSVYTVIITYAANLSENFHGFYKSTYRTQEGERRILAATQFEPTAARMAFPCFDEPALKASFSIKIKRDPRHLAISNMPLVKSVTVAEGLIEDHFDITVKMSTYLVAFIISDFKSVSKMTKSGVKVSVYAVPDKINQADYALDAAVTLLEFYEDYFSIPYPLPKQDLAAIPDFQSGAMENWGLTTYRESALLYDKEKSSASSKLGITMTVSHELAHQWFGNLVTMEWWNDLWLNEGFAKFMEFVSVTVTHPELKVEEYFFGKCFNAMEVDALNSSHPVSTPVENPAQIREMFDEVSYEKGACILNMLRDYLSADTFKRGIVQYLQKYSYKNTKNEDLWNSMMHICPTDGTQTMDGFCSRNQHSSSTSHWRQEVIDIKSMMNTWTLQKGFPLITITVRGRNVHLKQEHYMKGSECFPETGSLWHVPLTFITSKSDSVQRFLLKTKTDVIILPEAVEWIKFNVGMNGYYIVHYGDDGWASLNGLLKEAHTTISSNDRASLINNAFQLVSIGKLSIEKALDLILYLKNETEIMPIFQGLNELIPMYKLMEKRDMVEVETQFKDFLLRLLKDLINKQTWTDEGSVSERMLRSQLLLLACVHRYQLCVQRAERYFREWKASNGNMSLPIDVTLAVFAVGAQNTEGWDFLYSKYQSSLSSTEKSQIEFSLCISQDPEKLQWLLDQSFKGEIIKTQEFPHILTLIGRNPVGYPLAWKFLKENWNKIVQKFELGSSSIAHMVMGTTNQFSTRARLEEVKGFFSSLKKNGSQLRCVQQTIETIEENIRWMDKNFDKIRLWLQKERQELL.

At Met1 to Pro2 the chain is on the cytoplasmic side. A helical; Signal-anchor for type II membrane protein membrane pass occupies residues Ser3–Ser23. Topologically, residues Asp24–Leu930 are lumenal. Asn59 and Asn143 each carry an N-linked (GlcNAc...) asparagine glycan. Residues Glu172 and Gly306–Asn310 each bind substrate. His342 lines the Zn(2+) pocket. Glu343 functions as the Proton acceptor in the catalytic mechanism. Positions 346 and 365 each coordinate Zn(2+). Cysteines 393 and 432 form a disulfide. 2 N-linked (GlcNAc...) asparagine glycosylation sites follow: Asn403 and Asn655. Cysteines 725 and 732 form a disulfide. N-linked (GlcNAc...) asparagine glycosylation is found at Asn749 and Asn890.

It belongs to the peptidase M1 family. In terms of assembly, monomer. May also exist as a heterodimer; with ERAP2. Interacts with RBMX. Zn(2+) is required as a cofactor. Post-translationally, N-glycosylated. As to expression, ubiquitous.

It localises to the endoplasmic reticulum membrane. Its function is as follows. Aminopeptidase that plays a central role in peptide trimming, a step required for the generation of most HLA class I-binding peptides. Peptide trimming is essential to customize longer precursor peptides to fit them to the correct length required for presentation on MHC class I molecules. Strongly prefers substrates 9-16 residues long. Rapidly degrades 13-mer to a 9-mer and then stops. Preferentially hydrolyzes the residue Leu and peptides with a hydrophobic C-terminus, while it has weak activity toward peptides with charged C-terminus. May play a role in the inactivation of peptide hormones. May be involved in the regulation of blood pressure through the inactivation of angiotensin II and/or the generation of bradykinin in the kidney. This is Endoplasmic reticulum aminopeptidase 1 (Erap1) from Rattus norvegicus (Rat).